The primary structure comprises 33 residues: Cytochrome b6-f complex subunit 8 (33 aa).

A helical membrane pass occupies residues 2 to 22 (IFQIGWAALAAIFTFSIAMVV).

The protein belongs to the PetN family. The 4 large subunits of the cytochrome b6-f complex are cytochrome b6, subunit IV (17 kDa polypeptide, PetD), cytochrome f and the Rieske protein, while the 4 small subunits are PetG, PetL, PetM and PetN. The complex functions as a dimer.

It localises to the cellular thylakoid membrane. Its function is as follows. Component of the cytochrome b6-f complex, which mediates electron transfer between photosystem II (PSII) and photosystem I (PSI), cyclic electron flow around PSI, and state transitions. This is Cytochrome b6-f complex subunit 8 from Prochlorococcus marinus (strain MIT 9301).